The sequence spans 445 residues: MIFTLLSTLPVLIITTELDYSELVHSAELVSSSSYIHHKTNKKPDNCTRDTDIIDRLLNGTGYNKFRIPQEEGMTVVVEIWIQAITSIDELTNDFDMDIYITETWLDPALNFQTMTPCKGNLSLNHQVLDRLWTPNSCFINSKVAQIHNSPFRSVFLMLFPNGTVMVNYRVRVKGPCSLDLSNFPLDLQKCSLIYESFNYNRQEVEMRWSDAEHPVFNLSKIMLPDFDLFEIQTERRQEPYPAGMWDELHVTIIFERRFIWYFMQAYLPTYLTIFISWISFSLGSRAIPARTMLGVNSLLAIVFSFGNIMRNLPRVSYIKGIDVWMLVSMTFIFCSLLELAIVGFMVRDETVAKKKQQKKISGNISREESPHGIISERRFMFPPGCSESSKSLSSCTSGWTPERIDSISSVMFPFSFFVFNIIYWFYYIHRKEIIKQNLINRVDG.

Residues 1–26 (MIFTLLSTLPVLIITTELDYSELVHS) form the signal peptide. Residues 27–258 (AELVSSSSYI…LHVTIIFERR (232 aa)) lie on the Extracellular side of the membrane. N-linked (GlcNAc...) asparagine glycans are attached at residues Asn46, Asn59, Asn121, and Asn162. Cys177 and Cys191 form a disulfide bridge. Asn218 is a glycosylation site (N-linked (GlcNAc...) asparagine). The helical transmembrane segment at 259–279 (FIWYFMQAYLPTYLTIFISWI) threads the bilayer. Topologically, residues 280–286 (SFSLGSR) are cytoplasmic. A helical transmembrane segment spans residues 287-307 (AIPARTMLGVNSLLAIVFSFG). Residues 308–326 (NIMRNLPRVSYIKGIDVWM) lie on the Extracellular side of the membrane. Residues 327–347 (LVSMTFIFCSLLELAIVGFMV) form a helical membrane-spanning segment. At 348-407 (RDETVAKKKQQKKISGNISREESPHGIISERRFMFPPGCSESSKSLSSCTSGWTPERIDS) the chain is on the cytoplasmic side. Residues 408–428 (ISSVMFPFSFFVFNIIYWFYY) form a helical membrane-spanning segment. Over 429-445 (IHRKEIIKQNLINRVDG) the chain is Extracellular.

It belongs to the ligand-gated ion channel (TC 1.A.9) family. In terms of assembly, homopentamer (in vitro). May interact with either acc-3 or acc-4; the interactions do not result in significant heteropentameric ion channel activity. Expressed in RIA, RIG, PHA and AIZ glutamatergic neurons, URX and RIH cholinergic neurons, and in male-specific MCM neurons.

Its subcellular location is the cell membrane. In terms of biological role, acetylcholine-gated chloride channel subunit. Currents in channels are triggered in response to acetylcholine. Channel properties may be modulated by the formation of homomeric and heteromeric channels. This Caenorhabditis elegans protein is Acetylcholine-gated chloride channel subunit acc-2.